A 54-amino-acid polypeptide reads, in one-letter code: Large ribosomal subunit protein bL32c (54 aa).

Belongs to the bacterial ribosomal protein bL32 family.

It is found in the plastid. It localises to the chloroplast. The protein is Large ribosomal subunit protein bL32c of Panax ginseng (Korean ginseng).